A 308-amino-acid chain; its full sequence is UPF0026 protein HP_0117 (308 aa).

A Radical SAM core domain is found at Phe-18 to Ala-248. Residues Cys-33, Cys-37, and Cys-40 each coordinate [4Fe-4S] cluster.

It belongs to the UPF0026 family. [4Fe-4S] cluster is required as a cofactor.

This Helicobacter pylori (strain ATCC 700392 / 26695) (Campylobacter pylori) protein is UPF0026 protein HP_0117.